Here is a 336-residue protein sequence, read N- to C-terminus: Dihydroorotate dehydrogenase (quinone) (336 aa).

FMN-binding positions include 62 to 66 (AGLDK) and Thr-86. Lys-66 contributes to the substrate binding site. Residue 111–115 (NRMGF) participates in substrate binding. Residues Asn-139 and Asn-172 each contribute to the FMN site. A substrate-binding site is contributed by Asn-172. Catalysis depends on Ser-175, which acts as the Nucleophile. Asn-177 provides a ligand contact to substrate. FMN-binding residues include Lys-217 and Thr-245. Residue 246–247 (NT) participates in substrate binding. FMN is bound by residues Gly-268, Gly-297, and 318 to 319 (YS).

Belongs to the dihydroorotate dehydrogenase family. Type 2 subfamily. Monomer. FMN is required as a cofactor.

The protein localises to the cell membrane. It carries out the reaction (S)-dihydroorotate + a quinone = orotate + a quinol. Its pathway is pyrimidine metabolism; UMP biosynthesis via de novo pathway; orotate from (S)-dihydroorotate (quinone route): step 1/1. Functionally, catalyzes the conversion of dihydroorotate to orotate with quinone as electron acceptor. This is Dihydroorotate dehydrogenase (quinone) from Baumannia cicadellinicola subsp. Homalodisca coagulata.